We begin with the raw amino-acid sequence, 274 residues long: NH(3)-dependent NAD(+) synthetase (274 aa).

Gly-46–Ser-53 contributes to the ATP binding site. Asp-52 contributes to the Mg(2+) binding site. Arg-140 lines the deamido-NAD(+) pocket. ATP is bound at residue Thr-160. Glu-165 lines the Mg(2+) pocket. Positions 173 and 180 each coordinate deamido-NAD(+). ATP contacts are provided by Lys-189 and Thr-211. Position 260-261 (His-260–Lys-261) interacts with deamido-NAD(+).

The protein belongs to the NAD synthetase family. As to quaternary structure, homodimer.

The enzyme catalyses deamido-NAD(+) + NH4(+) + ATP = AMP + diphosphate + NAD(+) + H(+). It functions in the pathway cofactor biosynthesis; NAD(+) biosynthesis; NAD(+) from deamido-NAD(+) (ammonia route): step 1/1. In terms of biological role, catalyzes the ATP-dependent amidation of deamido-NAD to form NAD. Uses ammonia as a nitrogen source. The polypeptide is NH(3)-dependent NAD(+) synthetase (Lactococcus lactis subsp. cremoris (strain MG1363)).